The primary structure comprises 408 residues: Translation initiation factor 2 subunit gamma (408 aa).

The tr-type G domain maps to 4–201; that stretch reads QSEINIGLVG…TIEERIKTPK (198 aa). A G1 region spans residues 13 to 20; it reads GHVDHGKT. Mg(2+)-binding residues include aspartate 16, threonine 20, glycine 41, and serine 43. 16–21 is a GTP binding site; that stretch reads DHGKTT. The tract at residues 41-45 is G2; that stretch reads GISIR. Zn(2+) is bound by residues cysteine 56, cysteine 59, cysteine 71, and cysteine 74. The tract at residues 88 to 91 is G3; that stretch reads DAPG. GTP-binding positions include 144–147 and 179–181; these read NKID and SAQ. The segment at 144-147 is G4; the sequence is NKID. The G5 stretch occupies residues 179 to 181; sequence SAQ.

Belongs to the TRAFAC class translation factor GTPase superfamily. Classic translation factor GTPase family. EIF2G subfamily. Heterotrimer composed of an alpha, a beta and a gamma chain. Mg(2+) serves as cofactor.

The enzyme catalyses GTP + H2O = GDP + phosphate + H(+). Functionally, eIF-2 functions in the early steps of protein synthesis by forming a ternary complex with GTP and initiator tRNA. The polypeptide is Translation initiation factor 2 subunit gamma (Methanothermobacter thermautotrophicus (strain ATCC 29096 / DSM 1053 / JCM 10044 / NBRC 100330 / Delta H) (Methanobacterium thermoautotrophicum)).